Here is a 361-residue protein sequence, read N- to C-terminus: Probable dual-specificity RNA methyltransferase RlmN (361 aa).

Catalysis depends on Glu-91, which acts as the Proton acceptor. The 233-residue stretch at 97–329 (QHYGLSVCVT…KKKGGNCVVR (233 aa)) folds into the Radical SAM core domain. Cys-104 and Cys-340 are disulfide-bonded. Residues Cys-111, Cys-115, and Cys-118 each coordinate [4Fe-4S] cluster. Residues 163–164 (GE), Ser-195, 218–220 (SLH), and Asn-296 each bind S-adenosyl-L-methionine. Cys-340 functions as the S-methylcysteine intermediate in the catalytic mechanism.

Belongs to the radical SAM superfamily. RlmN family. [4Fe-4S] cluster is required as a cofactor.

It is found in the cytoplasm. The enzyme catalyses adenosine(2503) in 23S rRNA + 2 reduced [2Fe-2S]-[ferredoxin] + 2 S-adenosyl-L-methionine = 2-methyladenosine(2503) in 23S rRNA + 5'-deoxyadenosine + L-methionine + 2 oxidized [2Fe-2S]-[ferredoxin] + S-adenosyl-L-homocysteine. It carries out the reaction adenosine(37) in tRNA + 2 reduced [2Fe-2S]-[ferredoxin] + 2 S-adenosyl-L-methionine = 2-methyladenosine(37) in tRNA + 5'-deoxyadenosine + L-methionine + 2 oxidized [2Fe-2S]-[ferredoxin] + S-adenosyl-L-homocysteine. Functionally, specifically methylates position 2 of adenine 2503 in 23S rRNA and position 2 of adenine 37 in tRNAs. The polypeptide is Probable dual-specificity RNA methyltransferase RlmN (Streptococcus pneumoniae serotype 2 (strain D39 / NCTC 7466)).